The primary structure comprises 305 residues: Acetylglutamate kinase (305 aa).

Substrate is bound by residues 67–68 (GG), R89, and N190.

This sequence belongs to the acetylglutamate kinase family. ArgB subfamily.

Its subcellular location is the cytoplasm. It catalyses the reaction N-acetyl-L-glutamate + ATP = N-acetyl-L-glutamyl 5-phosphate + ADP. The protein operates within amino-acid biosynthesis; L-arginine biosynthesis; N(2)-acetyl-L-ornithine from L-glutamate: step 2/4. Functionally, catalyzes the ATP-dependent phosphorylation of N-acetyl-L-glutamate. The polypeptide is Acetylglutamate kinase (Bifidobacterium longum (strain NCC 2705)).